A 500-amino-acid polypeptide reads, in one-letter code: Transcription factor-like 5 protein (500 aa).

Composition is skewed to pro residues over residues 1–12 (MSGPGPREPPPE) and 196–210 (AEPP…PPEP). Disordered stretches follow at residues 1-34 (MSGP…ALGE) and 191-211 (FNSI…PEPG). The tract at residues 347 to 356 (MRQLDTNVER) is R3 epitope (recognized by Chagas's antibodies). The interval 365-410 (VGEGATATQGAWQSSESSQANLGEQAQSGPQGGRSQRRERHNRMER) is disordered. A compositionally biased stretch (polar residues) spans 370 to 393 (TATQGAWQSSESSQANLGEQAQSG). The 51-residue stretch at 400-450 (QRRERHNRMERDRRRRIRICCDELNLLVPFCNAETDKATTLQWTTAFLKYI) folds into the bHLH domain. The interval 481–500 (SLVTCPAQGSLQSSPSMEIK) is R1 epitope (recognized by Chagas's antibodies).

Efficient DNA binding requires dimerization with another bHLH protein. Isoform 3 is testis specific. Isoform 2 is pancreas specific.

The protein localises to the nucleus. Its function is as follows. Putative transcription factor. Isoform 3 may play a role in early spermatogenesis. In Homo sapiens (Human), this protein is Transcription factor-like 5 protein (TCFL5).